Reading from the N-terminus, the 192-residue chain is Imidazoleglycerol-phosphate dehydratase (192 aa).

It belongs to the imidazoleglycerol-phosphate dehydratase family.

Its subcellular location is the cytoplasm. The enzyme catalyses D-erythro-1-(imidazol-4-yl)glycerol 3-phosphate = 3-(imidazol-4-yl)-2-oxopropyl phosphate + H2O. Its pathway is amino-acid biosynthesis; L-histidine biosynthesis; L-histidine from 5-phospho-alpha-D-ribose 1-diphosphate: step 6/9. The chain is Imidazoleglycerol-phosphate dehydratase from Staphylococcus aureus (strain MRSA252).